The following is a 191-amino-acid chain: D-glycero-beta-D-manno-heptose-1,7-bisphosphate 7-phosphatase (191 aa).

Catalysis depends on D11, which acts as the Nucleophile. Positions 11 and 13 each coordinate Mg(2+). Residues 11 to 13 (DRD), 19 to 22 (DHGY), and 53 to 56 (TNQS) each bind substrate. The active-site Proton donor is the D13. Residues C92, H94, C107, and C109 each coordinate Zn(2+). 110-111 (RK) contacts substrate. D136 and K137 together coordinate Mg(2+). Position 137 (K137) interacts with substrate.

The protein belongs to the GmhB family. In terms of assembly, monomer. Mg(2+) is required as a cofactor. It depends on Zn(2+) as a cofactor.

It localises to the cytoplasm. It carries out the reaction D-glycero-beta-D-manno-heptose 1,7-bisphosphate + H2O = D-glycero-beta-D-manno-heptose 1-phosphate + phosphate. It participates in nucleotide-sugar biosynthesis; ADP-L-glycero-beta-D-manno-heptose biosynthesis; ADP-L-glycero-beta-D-manno-heptose from D-glycero-beta-D-manno-heptose 7-phosphate: step 2/4. It functions in the pathway bacterial outer membrane biogenesis; LPS core biosynthesis. Functionally, converts the D-glycero-beta-D-manno-heptose 1,7-bisphosphate intermediate into D-glycero-beta-D-manno-heptose 1-phosphate by removing the phosphate group at the C-7 position. This Escherichia coli O157:H7 protein is D-glycero-beta-D-manno-heptose-1,7-bisphosphate 7-phosphatase (gmhB).